A 473-amino-acid polypeptide reads, in one-letter code: MATQPTPLTAVVLAAGQGTRMKSARPKVLHELCGRPMLHYVVDAALAAGASDVVVVVGHGRDEVSAALDKAFGAQGKKVRTALQPQQRGTGDAVRCAMPHIDATSEAILILCGDTPLLDPEQLTQLRGALDRAGDAPIAMLTAEVSDPTGYGRILRDASGRVIGIREHKDATAEERAITEVNPGVYLARSGFLGRALAGLTTDNAQGELYLTDIVAQAAKAGGAAAVVARDVGSLVGINDRAQLAAAEEVLYGRIADRLRKSGVTIRTSARIDAGVLVEPDAVIEHAVVLRGRTRVGAGARIDVGSVLTDVVVEAGASVKPYTVASQSSIGAGAQIGPFSHLRPESQIEADAHIGNFVETKKTVVRKGAKANHLAYLGDGDIGEGANVGAGTIFCNYDGFRKHRTEIGAGAFIGSDSQIVAPVKIGAGAYVATGTTVTRDVPDEALAIGRVKQENKEGYATRLKARLKDAAKK.

Residues 1–241 (MATQPTPLTA…VGSLVGINDR (241 aa)) are pyrophosphorylase. UDP-N-acetyl-alpha-D-glucosamine is bound by residues 13–16 (LAAG), lysine 27, glutamine 84, and 89–90 (GT). Mg(2+) is bound at residue aspartate 114. UDP-N-acetyl-alpha-D-glucosamine-binding residues include glycine 152, glutamate 167, asparagine 182, and asparagine 239. Position 239 (asparagine 239) interacts with Mg(2+). The segment at 242 to 262 (AQLAAAEEVLYGRIADRLRKS) is linker. An N-acetyltransferase region spans residues 263–473 (GVTIRTSARI…KARLKDAAKK (211 aa)). Residues arginine 343 and lysine 361 each coordinate UDP-N-acetyl-alpha-D-glucosamine. Catalysis depends on histidine 373, which acts as the Proton acceptor. Tyrosine 376 and asparagine 387 together coordinate UDP-N-acetyl-alpha-D-glucosamine. Acetyl-CoA-binding positions include alanine 390, 396-397 (NY), serine 415, threonine 433, and arginine 450.

The protein in the N-terminal section; belongs to the N-acetylglucosamine-1-phosphate uridyltransferase family. This sequence in the C-terminal section; belongs to the transferase hexapeptide repeat family. Homotrimer. Mg(2+) serves as cofactor.

The protein localises to the cytoplasm. The catalysed reaction is alpha-D-glucosamine 1-phosphate + acetyl-CoA = N-acetyl-alpha-D-glucosamine 1-phosphate + CoA + H(+). It carries out the reaction N-acetyl-alpha-D-glucosamine 1-phosphate + UTP + H(+) = UDP-N-acetyl-alpha-D-glucosamine + diphosphate. It functions in the pathway nucleotide-sugar biosynthesis; UDP-N-acetyl-alpha-D-glucosamine biosynthesis; N-acetyl-alpha-D-glucosamine 1-phosphate from alpha-D-glucosamine 6-phosphate (route II): step 2/2. The protein operates within nucleotide-sugar biosynthesis; UDP-N-acetyl-alpha-D-glucosamine biosynthesis; UDP-N-acetyl-alpha-D-glucosamine from N-acetyl-alpha-D-glucosamine 1-phosphate: step 1/1. It participates in bacterial outer membrane biogenesis; LPS lipid A biosynthesis. In terms of biological role, catalyzes the last two sequential reactions in the de novo biosynthetic pathway for UDP-N-acetylglucosamine (UDP-GlcNAc). The C-terminal domain catalyzes the transfer of acetyl group from acetyl coenzyme A to glucosamine-1-phosphate (GlcN-1-P) to produce N-acetylglucosamine-1-phosphate (GlcNAc-1-P), which is converted into UDP-GlcNAc by the transfer of uridine 5-monophosphate (from uridine 5-triphosphate), a reaction catalyzed by the N-terminal domain. This chain is Bifunctional protein GlmU, found in Sorangium cellulosum (strain So ce56) (Polyangium cellulosum (strain So ce56)).